A 241-amino-acid chain; its full sequence is MRSGVIAQKVGMTRVFTEAGEHIPVTVLKLGNCQVLGHRTKEKNGYVALQVGSGSRKTVYMPKAERGQFAAAKVEPKRKVEEFRVSEDALLPVGAEIQADHFVVGQFVDVTGTSTGKGFAGGMKRWNFGGLRATHGVSVSHRSIGSTGGRQDPGKTFKNKKMPGHMGVDRVTTLNLRVVQTDVERGLILVEGAVPGTKGGWIRVRDAVKKALPADAPKPGKFRLANGDAAAEAPAAEQEGA.

Disordered stretches follow at residues 139 to 166 and 214 to 241; these read VSHR…PGHM and ADAP…QEGA. An N5-methylglutamine modification is found at glutamine 151. The span at 229–241 shows a compositional bias: low complexity; sequence AAAEAPAAEQEGA.

In terms of assembly, part of the 50S ribosomal subunit. Forms a cluster with proteins L14 and L19. Methylated, on either Lys-155 or Lys-158. In terms of processing, methylated by PrmB.

One of the primary rRNA binding proteins, it binds directly near the 3'-end of the 23S rRNA, where it nucleates assembly of the 50S subunit. The polypeptide is Large ribosomal subunit protein uL3 (Rhodopseudomonas palustris (strain ATCC BAA-98 / CGA009)).